A 442-amino-acid polypeptide reads, in one-letter code: QWRF motif-containing protein 6 (442 aa).

Disordered stretches follow at residues 1–144 (MEAK…LSQQ) and 221–240 (FSRLGLPLPPMAPKVPADTK). Positions 57–66 (KQHHLQHHQI) are enriched in basic residues. Positions 80-89 (KMADGDENRS) are enriched in basic and acidic residues. The short motif at 264 to 267 (QWRF) is the QWRF motif element.

The protein belongs to the QWRF family.

This is QWRF motif-containing protein 6 (QWRF6) from Arabidopsis thaliana (Mouse-ear cress).